Consider the following 449-residue polypeptide: Phosphoglucosamine mutase (449 aa).

The Phosphoserine intermediate role is filled by Ser100. 4 residues coordinate Mg(2+): Ser100, Asp241, Asp243, and Asp245. A Phosphoserine modification is found at Ser100.

This sequence belongs to the phosphohexose mutase family. The cofactor is Mg(2+). In terms of processing, activated by phosphorylation.

The catalysed reaction is alpha-D-glucosamine 1-phosphate = D-glucosamine 6-phosphate. Its function is as follows. Catalyzes the conversion of glucosamine-6-phosphate to glucosamine-1-phosphate. The polypeptide is Phosphoglucosamine mutase (Geobacillus kaustophilus (strain HTA426)).